Consider the following 285-residue polypeptide: Secreted LysM effector slp2 (285 aa).

Positions 1–16 are cleaved as a signal peptide; it reads MLPITVVTLFAALAAA. The tract at residues 75 to 143 is disordered; it reads GDAAKAGDAA…KGGDAAKGGN (69 aa). Residues 85-116 are compositionally biased toward basic and acidic residues; the sequence is KGGDAKGGDAKGGDAKGGDAKGGKGGDAKGGK. Residues 117–139 are compositionally biased toward gly residues; the sequence is GGDAAKGGKGGDAAKGGKGGDAA. 2 LysM domains span residues 157 to 201 and 237 to 281; these read VEHK…VLKI and FTRV…TINL.

This sequence belongs to the secreted LysM effector family.

Might have a role in sequestration of chitin oligosaccharides (breakdown products of fungal cell walls that are released during invasion and act as triggers of host immunity) to dampen host defense. The sequence is that of Secreted LysM effector slp2 from Pyricularia oryzae (strain 70-15 / ATCC MYA-4617 / FGSC 8958) (Rice blast fungus).